The chain runs to 751 residues: Translation initiation factor IF-2, chloroplastic (751 aa).

A disordered region spans residues 86–156 (KKEKSKFRKD…KSKKQTSAKN (71 aa)). The segment covering 93–106 (RKDEDYDSLKREDN) has biased composition (basic and acidic residues). A compositionally biased stretch (low complexity) spans 129 to 143 (VSNTNTLNKKNVVKS). The region spanning 250-423 (KRPPVIAIMG…ILVSEIEDLK (174 aa)) is the tr-type G domain. The G1 stretch occupies residues 259–266 (GHVDHGKT). GTP is bound at residue 259–266 (GHVDHGKT). The interval 284–288 (GITQK) is G2. The interval 309-312 (DTPG) is G3. Residues 309 to 313 (DTPGH) and 363 to 366 (NKID) each bind GTP. Residues 363 to 366 (NKID) are G4. Residues 399–401 (SAM) are G5.

Belongs to the TRAFAC class translation factor GTPase superfamily. Classic translation factor GTPase family. IF-2 subfamily.

It is found in the plastid. Its subcellular location is the chloroplast. Its function is as follows. One of the essential components for the initiation of protein synthesis. Protects formylmethionyl-tRNA from spontaneous hydrolysis and promotes its binding to the 30S ribosomal subunits. Also involved in the hydrolysis of GTP during the formation of the 70S ribosomal complex. The protein is Translation initiation factor IF-2, chloroplastic (infB) of Rhodomonas salina (Cryptomonas salina).